The sequence spans 67 residues: SPbeta prophage-derived uncharacterized protein YoqF (67 aa).

This Bacillus subtilis (strain 168) protein is SPbeta prophage-derived uncharacterized protein YoqF (yoqF).